The primary structure comprises 188 residues: Elongation factor P (188 aa).

This sequence belongs to the elongation factor P family.

The protein resides in the cytoplasm. It participates in protein biosynthesis; polypeptide chain elongation. Functionally, involved in peptide bond synthesis. Stimulates efficient translation and peptide-bond synthesis on native or reconstituted 70S ribosomes in vitro. Probably functions indirectly by altering the affinity of the ribosome for aminoacyl-tRNA, thus increasing their reactivity as acceptors for peptidyl transferase. This Leptospira interrogans serogroup Icterohaemorrhagiae serovar copenhageni (strain Fiocruz L1-130) protein is Elongation factor P.